A 198-amino-acid polypeptide reads, in one-letter code: MENRWQVQVVWMIDRMRLRTWTSLVKHHIFTTKCCKDWKYRHHYETDTPKRAGEIHIPLTERSKLVVLHYWGLACGERPWHLGHGIGLEWRQGKYSTQIDPETADQLIHTRYFTCFAAGAVRQAILGERILTFCHFQSGHRQVGTLQFLAFRKVVESQDKQPKGPRRPLPSVTKLTEDRWNKHRTTTGRRENHTLSGC.

Residues 76–115 (GERPWHLGHGIGLEWRQGKYSTQIDPETADQLIHTRYFTC) are RNA-binding. Residue Thr97 is modified to Phosphothreonine; by host MAP4K1. The short motif at 109 to 140 (HTRYFTCFAAGAVRQAILGERILTFCHFQSGH) is the HCCH motif element. Thr145 is modified (phosphothreonine; by host). The short motif at 145 to 154 (TLQFLAFRKV) is the BC-box-like motif element. The multimerization stretch occupies residues 152 to 170 (RKVVESQDKQPKGPRRPLP). Residues 159-198 (DKQPKGPRRPLPSVTKLTEDRWNKHRTTTGRRENHTLSGC) are disordered. At Ser171 the chain carries Phosphoserine; by host MAP4K1. Residues 177–178 (ED) are membrane association. A compositionally biased stretch (basic and acidic residues) spans 188–198 (GRRENHTLSGC).

The protein belongs to the primate lentivirus group Vif protein family. Homomultimer; in vitro and presumably in vivo. Interacts with viral Pr55Gag precursor, host APOBEC3G, UBCE7IP1 isoform 3/ZIN, ABCE1 and possibly with SAT. Forms an E3 ligase complex by interacting with host CUL5 and elongin BC complex (ELOB and ELOC). Highly phosphorylated on serine and threonine residues. Thr-97 and Ser-171 are phosphorylated by the mitogen activated kinase MAP4K1. Post-translationally, polyubiquitinated and degraded by the proteasome in the presence of APOBEC3G.

The protein resides in the host cytoplasm. Its subcellular location is the host cell membrane. The protein localises to the virion. Functionally, counteracts the innate antiviral activity of APOBEC3G. Forms a complex with host APOBEC3G thus preventing the entry of this lethally hypermutating enzyme into progeny virions. Functions as an adapter molecule, recruiting APOBEC3G to the ubiquitin-proteasome machinery. Targets APOBEC3G for degradation through the assembly with elongin BC complex, CUL5 and RBX1. Binds viral RNA and affects the stability of viral nucleoprotein core. May play a role in viral morphology. Interacts with host ABCE1, which seems to be involved in lentiviruses capsid formation and displays RNase L inhibitor activity. This interaction may play a role in protecting viral RNA from damage during viral assembly. May interact with host SAT, which is a regulator of polyamine cell level. This interaction may be relevant since polyamines affect viral RNA properties. The chain is Virion infectivity factor from Pan troglodytes (Chimpanzee).